A 317-amino-acid chain; its full sequence is N-acetylmuramoyl-L-alanine amidase XlyB (317 aa).

A signal peptide spans 1–39 (MSIPVKKNLVSEAKYALKCPNAMSAEYITIHNTANDASA). The 103-residue stretch at 40 to 142 (ANEISYMIGN…QDWSGKYCPH (103 aa)) folds into the N-acetylmuramoyl-L-alanine amidase domain. Residues 177–221 (SEYHVKKGDTLSGIAASHGASVKTLQSINHITDPNHIKIGQVIKL) enclose the LysM domain.

The protein belongs to the N-acetylmuramoyl-L-alanine amidase 2 family.

Its subcellular location is the secreted. The enzyme catalyses Hydrolyzes the link between N-acetylmuramoyl residues and L-amino acid residues in certain cell-wall glycopeptides.. Its function is as follows. Autolysins are involved in some important biological processes such as cell separation, cell-wall turnover, competence for genetic transformation, formation of the flagella and sporulation. The sequence is that of N-acetylmuramoyl-L-alanine amidase XlyB (xlyB) from Bacillus subtilis (strain 168).